A 498-amino-acid polypeptide reads, in one-letter code: Calcitonin receptor (498 aa).

An N-terminal signal peptide occupies residues 1–29; that stretch reads MRFTLTRWCLTLFIFLNRPLPVLPDSADG. The Extracellular segment spans residues 30-147; it reads AHTPTLEPEP…FTPDKLQNAY (118 aa). 3 disulfide bridges follow: cysteine 56/cysteine 82, cysteine 73/cysteine 113, and cysteine 96/cysteine 135. 3 N-linked (GlcNAc...) asparagine glycosylation sites follow: asparagine 74, asparagine 126, and asparagine 131. Residues 148-170 traverse the membrane as a helical segment; sequence ILYYLAIVGHSLSILTLLISLGI. Topologically, residues 171-198 are cytoplasmic; sequence FMFLRYFNLLAPFNALLYPTRSISCQRV. A helical transmembrane segment spans residues 199 to 219; sequence TLHKNMFLTYVLNSIIIIVHL. The Extracellular portion of the chain corresponds to 220-236; it reads VVIVPNGELVKRDPPIC. Residues cysteine 236 and cysteine 306 are joined by a disulfide bond. The helical transmembrane segment at 237 to 259 threads the bilayer; it reads KVLHFFHQYMMSCNYFWMLCEGV. Residues 260–276 lie on the Cytoplasmic side of the membrane; sequence YLHTLIVVSVFAEGQRL. The helical transmembrane segment at 277–297 threads the bilayer; it reads WWYHVLGWGFPLIPTTAHAIT. At 298–313 the chain is on the extracellular side; the sequence is RAVLFNDNCWLSVDTN. A helical membrane pass occupies residues 314–337; sequence LLYIIHGPVMAALVVNFFFLLNIL. The Cytoplasmic portion of the chain corresponds to 338-357; sequence RVLVKKLKESQEAESHMYLK. Residues 358-376 traverse the membrane as a helical segment; it reads AVRATLILVPLLGVQFVVL. Residues 377–384 are Extracellular-facing; it reads PWRPSTPL. The helical transmembrane segment at 385–411 threads the bilayer; that stretch reads LGKIYDYVVHSLIHFQGFFVAIIYCFC. Topologically, residues 412 to 498 are cytoplasmic; the sequence is NHEVQGALKR…MEVLEQETSA (87 aa).

This sequence belongs to the G-protein coupled receptor 2 family. As to quaternary structure, heterodimer of CALCR and RAMP1, RAMP2 or RAMP3; the receptor complexes function as AMYR1, AMYR2 and AMYR3 receptors, respectively, and respond to amylin/IAPP, calcitonin/CT and CGRP1 ligands. Interacts with GPRASP2.

Its subcellular location is the cell membrane. Its function is as follows. G protein-coupled receptor activated by ligand peptides amylin (IAPP), calcitonin (CT/CALCA) and calcitonin gene-related peptide type 1 (CGRP1/CALCA). CALCR interacts with receptor-activity-modifying proteins RAMP1, 2 and 3 to form receptor complexes AMYR1, 2 and 3, respectively. IAPP, CT and CGRP1 activate CALCR and AMYRs with distinct modes of receptor activation resulting in specific phenotypes. Ligand binding causes a conformation change that triggers signaling via guanine nucleotide-binding proteins (G proteins) and modulates the activity of downstream effectors. Activates cAMP-dependent pathway. The protein is Calcitonin receptor of Sus scrofa (Pig).